The following is a 160-amino-acid chain: Probable NADH dehydrogenase [ubiquinone] 1 beta subcomplex subunit 2, mitochondrial (160 aa).

It belongs to the complex I NDUFB2 subunit family. Complex I is composed of 45 different subunits.

Its subcellular location is the mitochondrion inner membrane. Functionally, accessory subunit of the mitochondrial membrane respiratory chain NADH dehydrogenase (Complex I), that is believed not to be involved in catalysis. Complex I functions in the transfer of electrons from NADH to the respiratory chain. The immediate electron acceptor for the enzyme is believed to be ubiquinone. This is Probable NADH dehydrogenase [ubiquinone] 1 beta subcomplex subunit 2, mitochondrial from Caenorhabditis elegans.